The following is a 522-amino-acid chain: Na(+)/H(+) antiporter NhaB (522 aa).

9 helical membrane passes run 13-33 (FLGNSPDWYKLAIMGFLIINP), 98-118 (LLLVFMVAGIYFMKQLLLFVF), 140-160 (AFLSAFLDALTVIAVVISVSV), 239-259 (FFIRMLPVTLPVFIFGLLVCL), 304-324 (AIIGVWLVLALHLAEVGLVGL), 356-376 (LTVFFAVVAVIIEQSLFTPII), 390-410 (LFYLFNGLLSSVSDNVFVGTV), 446-466 (ATPNGQAAFLFLLTSALAPLI), and 477-497 (ALPYTLVMTIVGLLGVEFLLV).

Belongs to the NhaB Na(+)/H(+) (TC 2.A.34) antiporter family.

It is found in the cell inner membrane. It carries out the reaction 2 Na(+)(in) + 3 H(+)(out) = 2 Na(+)(out) + 3 H(+)(in). In terms of biological role, na(+)/H(+) antiporter that extrudes sodium in exchange for external protons. In Yersinia pestis bv. Antiqua (strain Angola), this protein is Na(+)/H(+) antiporter NhaB.